Reading from the N-terminus, the 753-residue chain is Rsm22-cox11 tandem protein 1, mitochondrial (753 aa).

Residues 1 to 39 (MPILTCRYKILFLYNLRNCFTFQNQRCLIPYGTTTTIRW) constitute a mitochondrion transit peptide. Residues Cys323, Cys329, Cys342, and Cys430 each coordinate [4Fe-4S] cluster. A helical transmembrane segment spans residues 571-591 (IYYLVAISIFALGLTYAAVPL). Residues 592-753 (YRLFCSKTGY…TNGNLLTKLN (162 aa)) are Mitochondrial intermembrane-facing.

The protein in the N-terminal section; belongs to the methyltransferase superfamily. Rsm22 family. In the C-terminal section; belongs to the COX11/CtaG family. Associates with the mitochondrial ribosome (mitoribosome). Only transiently interacts with the mitoribosome. In terms of processing, specific enzymatic cleavages in vivo by mitochondrial processing peptidase (MPP) yield mature proteins including rsm22-1 and cox11-1.

It localises to the mitochondrion. It is found in the mitochondrion inner membrane. Mitochondrial ribosome (mitoribosome) assembly factor. Binds at the interface of the head and body domains of the mitochondrial small ribosomal subunit (mt-SSU), occluding the mRNA channel and preventing compaction of the head domain towards the body. Probable inactive methyltransferase: retains the characteristic folding and ability to bind S-adenosyl-L-methionine, but it probably lost its methyltransferase activity. Its function is as follows. Exerts its effect at some terminal stage of cytochrome c oxidase synthesis, probably by being involved in the insertion of the copper B into subunit I. This Schizosaccharomyces pombe (strain 972 / ATCC 24843) (Fission yeast) protein is Rsm22-cox11 tandem protein 1, mitochondrial (cox1101).